Reading from the N-terminus, the 150-residue chain is SsrA-binding protein (150 aa).

The protein belongs to the SmpB family.

It localises to the cytoplasm. Its function is as follows. Required for rescue of stalled ribosomes mediated by trans-translation. Binds to transfer-messenger RNA (tmRNA), required for stable association of tmRNA with ribosomes. tmRNA and SmpB together mimic tRNA shape, replacing the anticodon stem-loop with SmpB. tmRNA is encoded by the ssrA gene; the 2 termini fold to resemble tRNA(Ala) and it encodes a 'tag peptide', a short internal open reading frame. During trans-translation Ala-aminoacylated tmRNA acts like a tRNA, entering the A-site of stalled ribosomes, displacing the stalled mRNA. The ribosome then switches to translate the ORF on the tmRNA; the nascent peptide is terminated with the 'tag peptide' encoded by the tmRNA and targeted for degradation. The ribosome is freed to recommence translation, which seems to be the essential function of trans-translation. This Flavobacterium psychrophilum (strain ATCC 49511 / DSM 21280 / CIP 103535 / JIP02/86) protein is SsrA-binding protein.